Reading from the N-terminus, the 313-residue chain is Protein MFI (313 aa).

In terms of assembly, can homodimerize. Interacts with MFF; the interaction inhibits MFF interaction with DNM1L. Enriched in the pancreatic beta cell and the testis and is expressed at low levels in other tissues tested.

The protein resides in the cytoplasm. Its subcellular location is the cytosol. It localises to the mitochondrion outer membrane. Its function is as follows. Acts as an inhibitor of mitochondrial fission. Interacts with MFF and prevents DNM1L recruitment to mitochondria, promoting a more fused mitochondrial network. In Homo sapiens (Human), this protein is Protein MFI.